Reading from the N-terminus, the 512-residue chain is 3-ketoacyl-CoA synthase 9 (512 aa).

Helical transmembrane passes span 44-64 (LITH…VTEI) and 83-103 (LVAF…YIMS). The FAE domain maps to 100–389 (YIMSRPRSVY…FFMTLVTKKL (290 aa)). Active-site residues include cysteine 244, histidine 323, histidine 407, histidine 411, histidine 440, and asparagine 444.

The protein belongs to the thiolase-like superfamily. Chalcone/stilbene synthases family. Expressed in seedlings, stems, leaves, flowers and siliques. Expressed in roots, leaves, and stems, including epidermis, silique walls, sepals, the upper portion of the styles, and seed coats, but not in developing embryos.

It localises to the endoplasmic reticulum membrane. It catalyses the reaction a very-long-chain acyl-CoA + malonyl-CoA + H(+) = a very-long-chain 3-oxoacyl-CoA + CO2 + CoA. The protein operates within lipid metabolism; fatty acid biosynthesis. In terms of biological role, involved in the elongation of C22 to C24 fatty acids, which are precursors for the biosynthesis of cuticular waxes, aliphatic suberins, and membrane lipids, including sphingolipids and phospholipids. In Arabidopsis thaliana (Mouse-ear cress), this protein is 3-ketoacyl-CoA synthase 9.